Here is a 651-residue protein sequence, read N- to C-terminus: PTS system N-acetylglucosamine-specific EIICBA component (651 aa).

In terms of domain architecture, PTS EIIC type-1 spans 1-371; that stretch reads MNILGFFQRL…FNLKTPGRED (371 aa). 12 consecutive transmembrane segments (helical) span residues 16 to 36, 40 to 60, 70 to 90, 92 to 112, 132 to 152, 165 to 185, 192 to 212, 232 to 252, 264 to 284, 285 to 305, 308 to 328, and 339 to 359; these read LPIAVLPVAALLLRFGQPDLL, FIAQAGGAIFDNLALIFAIGV, GSAALAGAVGYFVMTKAMVTI, PEINMGVLAGIITGLVAGAVY, FVPIATGFFCLILAAIFGYVW, WIVSAGALGSGIFGFINRLLI, VLNTIAWFQIGEFTNAAGTVF, GFFPIMMFGLPGAALAMYLAA, LLSVAITAFLTGVTEPLEFLF, LFLAPLLYLLHAVLTGISLFI, ALGIHAGFSFSAGAIDYVLMY, and MLLVMGVVFFFVYFLLFSAVI. The region spanning 390–472 is the PTS EIIB type-1 domain; the sequence is TQLATSYIAA…KKVVTRGPVA (83 aa). Cys412 serves as the catalytic Phosphocysteine intermediate; for EIIB activity. Position 412 is a phosphocysteine; by EIIA (Cys412). The PTS EIIA type-1 domain occupies 519–623; it reads DEAFASKAVG…SMISPVVCSN (105 aa). Residues His556 and His571 each coordinate Zn(2+). Residue His571 is the Tele-phosphohistidine intermediate; for EIIA activity of the active site. A Phosphohistidine; by HPr modification is found at His571.

It depends on Zn(2+) as a cofactor.

Its subcellular location is the cell inner membrane. The catalysed reaction is N(pros)-phospho-L-histidyl-[protein] + N-acetyl-D-glucosamine(out) = N-acetyl-D-glucosamine 6-phosphate(in) + L-histidyl-[protein]. The phosphoenolpyruvate-dependent sugar phosphotransferase system (sugar PTS), a major carbohydrate active transport system, catalyzes the phosphorylation of incoming sugar substrates concomitantly with their translocation across the cell membrane. This system is involved in N-acetylglucosamine transport. The sequence is that of PTS system N-acetylglucosamine-specific EIICBA component (nagE) from Klebsiella pneumoniae.